Reading from the N-terminus, the 265-residue chain is Zwei Ig domain protein zig-1 (265 aa).

An N-terminal signal peptide occupies residues M1–A17. Residues L18–Q232 lie on the Extracellular side of the membrane. 2 Ig-like C2-type domains span residues H41–G108 and P120–V220. 2 N-linked (GlcNAc...) asparagine glycosylation sites follow: N83 and N193. C155 and C202 form a disulfide bridge. Residues W233–F253 form a helical membrane-spanning segment. Over C254–A265 the chain is Cytoplasmic.

As to expression, expressed in neurons and body wall muscles.

It localises to the cell membrane. Functionally, probably not involved in maintaining the position of ASI and ASH head neuron cell bodies and ventral nerve cord axons of PVQ, PVP, RMEV, AVK and HSN neurons. This Caenorhabditis elegans protein is Zwei Ig domain protein zig-1.